The primary structure comprises 327 residues: Glycerol-3-phosphate acyltransferase (327 aa).

The next 5 membrane-spanning stretches (helical) occupy residues 3 to 23, 52 to 72, 78 to 98, 112 to 132, and 152 to 172; these read SLLW…LLFA, VGVL…AVAL, TVFH…SCFL, VFLP…LAVI, and MLLL…MVLV. 2 disordered regions span residues 184–212 and 233–327; these read SRGE…EAAA and PSTE…SSGQ. Low complexity predominate over residues 199–212; that stretch reads AQGTDAGAAPEAAA. Residues 237–246 show a composition bias toward polar residues; sequence AAPSQETSDA. The segment covering 259-271 has biased composition (basic and acidic residues); that stretch reads EGDKRENEEHDNA.

It belongs to the PlsY family. Probably interacts with PlsX.

The protein resides in the cell inner membrane. The enzyme catalyses an acyl phosphate + sn-glycerol 3-phosphate = a 1-acyl-sn-glycero-3-phosphate + phosphate. The protein operates within lipid metabolism; phospholipid metabolism. In terms of biological role, catalyzes the transfer of an acyl group from acyl-phosphate (acyl-PO(4)) to glycerol-3-phosphate (G3P) to form lysophosphatidic acid (LPA). This enzyme utilizes acyl-phosphate as fatty acyl donor, but not acyl-CoA or acyl-ACP. The chain is Glycerol-3-phosphate acyltransferase from Nitratidesulfovibrio vulgaris (strain ATCC 29579 / DSM 644 / CCUG 34227 / NCIMB 8303 / VKM B-1760 / Hildenborough) (Desulfovibrio vulgaris).